The sequence spans 411 residues: UPF0761 membrane protein PA0951 (411 aa).

6 helical membrane-spanning segments follow: residues 36–56 (LFAV…IPAF), 92–112 (HLTW…LVTI), 132–152 (FLLY…GFAV), 174–194 (LLGL…YSAV), 207–229 (GGVF…VSLF), and 244–264 (IFLL…VLVC).

This sequence belongs to the UPF0761 family.

The protein localises to the cell inner membrane. The polypeptide is UPF0761 membrane protein PA0951 (Pseudomonas aeruginosa (strain ATCC 15692 / DSM 22644 / CIP 104116 / JCM 14847 / LMG 12228 / 1C / PRS 101 / PAO1)).